We begin with the raw amino-acid sequence, 603 residues long: MNHIRNFSIIAHIDHGKSTLADRLIQRCGGLAEREMEAQVLDSMDIEKERGITIKAQTAALHYKALDGQVYNLNLIDTPGHVDFSYEVSRSLSACEGALLVVDASQGVEAQTVANCYTALDLGVEVVPVLNKMDLPNADPDNARSEIEDVIGIDATDAIPCSAKTGLGIDEILEAIVHKMPAPRGNPDGPLRAMIVDSWFDPYVGVVMLVRVVDGRLVKGERIKMMASGAMYNADNIGVFTPANEPRASLEAGEVGYIIAGIKELQAAKVGDTVTLIKPGTGGAAATATEALPGFKEIQPQVFAGLYPTEASEYDSLRDALEKLKLNDSSLRYEPEVSQALGFGFRCGFLGLLHMEIVQERLEREFDQDLITTAPSVVYQVVRNDGEVIMVENPSKMPDVGKMSEIREPIVTVHLYMPQEYVGAVMTLANQKRGVQMNMAYHGRQVMLTYEMPLGEIVLDFFDKLKSVSRGYASMDYEFKEYRASDVVKVDILLNGEKVDALSIIVHRSQSQYRGRAVVSKMREIISRQMFDVAIQAAIGVNIIARETIKALRKNVLAKCYGGDITRKKKLLEKQKAGKKRMKQIGSVEVPQEAFLAILQVED.

The tr-type G domain maps to 2–184 (NHIRNFSIIA…AIVHKMPAPR (183 aa)). Residues 14–19 (DHGKST) and 131–134 (NKMD) each bind GTP.

The protein belongs to the TRAFAC class translation factor GTPase superfamily. Classic translation factor GTPase family. LepA subfamily.

It localises to the cell inner membrane. The catalysed reaction is GTP + H2O = GDP + phosphate + H(+). Functionally, required for accurate and efficient protein synthesis under certain stress conditions. May act as a fidelity factor of the translation reaction, by catalyzing a one-codon backward translocation of tRNAs on improperly translocated ribosomes. Back-translocation proceeds from a post-translocation (POST) complex to a pre-translocation (PRE) complex, thus giving elongation factor G a second chance to translocate the tRNAs correctly. Binds to ribosomes in a GTP-dependent manner. The polypeptide is Elongation factor 4 (Variovorax paradoxus (strain S110)).